Reading from the N-terminus, the 234-residue chain is Small ribosomal subunit protein eS4 (234 aa).

The S4 RNA-binding domain occupies 43 to 106; that stretch reads MPIAVWLRDY…NEYYRVLLDE (64 aa).

This sequence belongs to the eukaryotic ribosomal protein eS4 family.

The polypeptide is Small ribosomal subunit protein eS4 (Nanoarchaeum equitans (strain Kin4-M)).